Consider the following 163-residue polypeptide: Probable ribosome biogenesis protein RLP24 (163 aa).

This sequence belongs to the eukaryotic ribosomal protein eL24 family. Associated with nucleolar and cytoplasmic pre-60S particles. At the end of biogenesis it dissociates from cytoplasmic pre-60S particles and is likely to be exchanged for its ribosomal homolog, RPL24.

The protein resides in the nucleus. The protein localises to the nucleolus. Its function is as follows. Involved in the biogenesis of the 60S ribosomal subunit. Ensures the docking of GTPBP4/NOG1 to pre-60S particles. This Bos taurus (Bovine) protein is Probable ribosome biogenesis protein RLP24 (RSL24D1).